The following is a 485-amino-acid chain: tRNA sulfurtransferase (485 aa).

Residues 61–165 form the THUMP domain; that stretch reads EELIALLQRI…DDKMMLVKAR (105 aa). ATP is bound by residues 183 to 184, K265, G287, and Q296; that span reads LI. C344 and C456 are joined by a disulfide. The 80-residue stretch at 404-483 folds into the Rhodanese domain; that stretch reads LGENEVILDI…FSNVRVFAKN (80 aa). The Cysteine persulfide intermediate role is filled by C456.

The protein belongs to the ThiI family.

It is found in the cytoplasm. It carries out the reaction [ThiI sulfur-carrier protein]-S-sulfanyl-L-cysteine + a uridine in tRNA + 2 reduced [2Fe-2S]-[ferredoxin] + ATP + H(+) = [ThiI sulfur-carrier protein]-L-cysteine + a 4-thiouridine in tRNA + 2 oxidized [2Fe-2S]-[ferredoxin] + AMP + diphosphate. It catalyses the reaction [ThiS sulfur-carrier protein]-C-terminal Gly-Gly-AMP + S-sulfanyl-L-cysteinyl-[cysteine desulfurase] + AH2 = [ThiS sulfur-carrier protein]-C-terminal-Gly-aminoethanethioate + L-cysteinyl-[cysteine desulfurase] + A + AMP + 2 H(+). It participates in cofactor biosynthesis; thiamine diphosphate biosynthesis. Functionally, catalyzes the ATP-dependent transfer of a sulfur to tRNA to produce 4-thiouridine in position 8 of tRNAs, which functions as a near-UV photosensor. Also catalyzes the transfer of sulfur to the sulfur carrier protein ThiS, forming ThiS-thiocarboxylate. This is a step in the synthesis of thiazole, in the thiamine biosynthesis pathway. The sulfur is donated as persulfide by IscS. This Haemophilus influenzae (strain PittGG) protein is tRNA sulfurtransferase.